A 92-amino-acid chain; its full sequence is Small ribosomal subunit protein uS19 (92 aa).

Belongs to the universal ribosomal protein uS19 family.

Functionally, protein S19 forms a complex with S13 that binds strongly to the 16S ribosomal RNA. The protein is Small ribosomal subunit protein uS19 of Rhizobium etli (strain CIAT 652).